A 563-amino-acid chain; its full sequence is Mitochondrial distribution and morphology protein 34 (563 aa).

Positions methionine 1–leucine 195 constitute an SMP-LTD domain. 2 disordered regions span residues glutamate 298–proline 499 and alanine 531–leucine 563. Composition is skewed to polar residues over residues alanine 303–arginine 332 and serine 346–leucine 357. Basic residues predominate over residues serine 365 to proline 383. The span at threonine 386–valine 407 shows a compositional bias: low complexity. Composition is skewed to polar residues over residues proline 458–glutamine 471 and tyrosine 478–proline 488. Basic and acidic residues predominate over residues alanine 531–alanine 540.

This sequence belongs to the MDM34 family. Component of the ER-mitochondria encounter structure (ERMES) or MDM complex, composed of MMM1, MDM10, MDM12 and MDM34.

The protein localises to the mitochondrion outer membrane. Component of the ERMES/MDM complex, which serves as a molecular tether to connect the endoplasmic reticulum (ER) and mitochondria. Components of this complex are involved in the control of mitochondrial shape and protein biogenesis, and function in nonvesicular lipid trafficking between the ER and mitochondria. MDM34 is required for the interaction of the ER-resident membrane protein MMM1 and the outer mitochondrial membrane-resident beta-barrel protein MDM10. This Botryotinia fuckeliana (strain B05.10) (Noble rot fungus) protein is Mitochondrial distribution and morphology protein 34.